The following is a 479-amino-acid chain: F-box/LRR-repeat protein 16 (479 aa).

The segment at 1 to 92 (MSSPGIDGDP…GPVSGPPVER (92 aa)) is disordered. A compositionally biased stretch (pro residues) spans 47-60 (CQPPPPPTLPPPSL). Arginine 92 is modified (omega-N-methylarginine). The F-box domain occupies 94-139 (PLATDEKILNGLFWYFSACEKCILAQVCKAWRRVLYQPKFWAGLTP). 6 LRR repeats span residues 321-342 (NLTS…ELVA), 347-369 (KLRS…YVAC), 373-394 (RLEE…SYLS), 398-419 (SLRS…KHLL), 423-444 (NLRL…SGLV), and 446-470 (LQEL…YFSQ).

Interacts with SKP1 and CUL1.

In terms of biological role, substrate-recognition component of the SCF (SKP1-CUL1-F-box protein)-type E3 ubiquitin ligase complex. This chain is F-box/LRR-repeat protein 16 (Fbxl16), found in Mus musculus (Mouse).